Reading from the N-terminus, the 2694-residue chain is Neurobeachin-like protein 1 (2694 aa).

Disordered regions lie at residues 1289–1314, 1330–1350, and 1381–1411; these read VLMK…TDEE, SLED…DSSV, and CEMS…SVHS. The span at 1290–1314 shows a compositional bias: basic and acidic residues; that stretch reads LMKDNDKNMSTEDTKKNSDEKTDEE. Polar residues predominate over residues 1383-1409; the sequence is MSDSGSQVPDSLPSTPSPVESTKSFSV. Residues 1883-1980 enclose the BEACH-type PH domain; the sequence is DQKEKLVLME…VRNKIYSRLL (98 aa). One can recognise a BEACH domain in the interval 1992 to 2284; that stretch reads RSPQELFKAS…QLLKEPHPPR (293 aa). WD repeat units lie at residues 2439–2478 and 2490–2531; these read RHMD…GVPV and GHTN…RTLR.

It belongs to the WD repeat neurobeachin family. As to expression, highly expressed in brain, kidney, prostate and testis. Weakly expressed in ovary, small intestine, colon and peripheral blood leukocytes. May be correlative to several tumors, such as ovary serous adenocarcinoma and metastasis mammary gland carcinoma breast.

The polypeptide is Neurobeachin-like protein 1 (NBEAL1) (Homo sapiens (Human)).